The chain runs to 200 residues: Dipicolinate synthase subunit B (200 aa).

In terms of assembly, dipicolinate synthase likely consists of DpaA and DpaB, since both proteins are required for DPA synthesis.

The enzyme catalyses (S)-2,3-dihydrodipicolinate + NADP(+) = dipicolinate + NADPH + H(+). Its function is as follows. Together with DpaA, catalyzes the conversion of dihydrodipicolinate to dipicolinate (DPA), which constitutes up to 10% of the dry weight of the spore. The polypeptide is Dipicolinate synthase subunit B (dpaB) (Bacillus subtilis (strain 168)).